The chain runs to 380 residues: Cytochrome b (380 aa).

4 consecutive transmembrane segments (helical) span residues phenylalanine 33 to methionine 53, tryptophan 77 to valine 98, tryptophan 113 to leucine 133, and phenylalanine 178 to leucine 198. 2 residues coordinate heme b: histidine 83 and histidine 97. The heme b site is built by histidine 182 and histidine 196. Position 201 (histidine 201) interacts with a ubiquinone. Helical transmembrane passes span isoleucine 226–phenylalanine 246, leucine 288–asparagine 308, isoleucine 320–glycine 340, and phenylalanine 347–proline 367.

Belongs to the cytochrome b family. As to quaternary structure, the cytochrome bc1 complex contains 11 subunits: 3 respiratory subunits (MT-CYB, CYC1 and UQCRFS1), 2 core proteins (UQCRC1 and UQCRC2) and 6 low-molecular weight proteins (UQCRH/QCR6, UQCRB/QCR7, UQCRQ/QCR8, UQCR10/QCR9, UQCR11/QCR10 and a cleavage product of UQCRFS1). This cytochrome bc1 complex then forms a dimer. It depends on heme b as a cofactor.

The protein localises to the mitochondrion inner membrane. Functionally, component of the ubiquinol-cytochrome c reductase complex (complex III or cytochrome b-c1 complex) that is part of the mitochondrial respiratory chain. The b-c1 complex mediates electron transfer from ubiquinol to cytochrome c. Contributes to the generation of a proton gradient across the mitochondrial membrane that is then used for ATP synthesis. The sequence is that of Cytochrome b (MT-CYB) from Microryzomys minutus (Forest small rice rat).